Here is a 1225-residue protein sequence, read N- to C-terminus: Mediator of RNA polymerase II transcription subunit 13 (1225 aa).

This sequence belongs to the Mediator complex subunit 13 family. As to quaternary structure, component of the srb8-11 complex which consists of rb8, srb9(TRAP240), srb10 and srb11. The srb8-11 complex associates with the Mediator complex thereby blocking association with RNA polymerase II and leading to reduced transcriptional activation by Mediator.

It is found in the nucleus. Its function is as follows. Component of the srb8-11 complex. The srb8-11 complex is a regulatory module of the Mediator complex which is itself involved in regulation of basal and activated RNA polymerase II-dependent transcription. The srb8-11 complex may be involved in the transcriptional repression of a subset of genes regulated by Mediator. It may inhibit the association of the Mediator complex with RNA polymerase II to form the holoenzyme complex. The sequence is that of Mediator of RNA polymerase II transcription subunit 13 (srb9) from Schizosaccharomyces pombe (strain 972 / ATCC 24843) (Fission yeast).